Consider the following 545-residue polypeptide: CTP synthase (545 aa).

The interval 1 to 266 (MTTRYIFVTG…DDLVIKRFNL (266 aa)) is amidoligase domain. A CTP-binding site is contributed by serine 14. UTP is bound at residue serine 14. ATP-binding positions include 15-20 (SLGKGI) and aspartate 72. Mg(2+) is bound by residues aspartate 72 and glutamate 140. Residues 147-149 (DIE), 187-192 (KTKPTQ), and lysine 223 contribute to the CTP site. Residues 187–192 (KTKPTQ) and lysine 223 contribute to the UTP site. Residue 239 to 241 (KDV) coordinates ATP. Positions 291–542 (TIGMVGKYIE…IAASYAYQKR (252 aa)) constitute a Glutamine amidotransferase type-1 domain. An L-glutamine-binding site is contributed by glycine 352. Cysteine 379 (nucleophile; for glutamine hydrolysis) is an active-site residue. Residues 380 to 383 (LGMQ), glutamate 403, and arginine 470 contribute to the L-glutamine site. Residues histidine 515 and glutamate 517 contribute to the active site.

It belongs to the CTP synthase family. As to quaternary structure, homotetramer.

The catalysed reaction is UTP + L-glutamine + ATP + H2O = CTP + L-glutamate + ADP + phosphate + 2 H(+). It carries out the reaction L-glutamine + H2O = L-glutamate + NH4(+). It catalyses the reaction UTP + NH4(+) + ATP = CTP + ADP + phosphate + 2 H(+). The protein operates within pyrimidine metabolism; CTP biosynthesis via de novo pathway; CTP from UDP: step 2/2. Its activity is regulated as follows. Allosterically activated by GTP, when glutamine is the substrate; GTP has no effect on the reaction when ammonia is the substrate. The allosteric effector GTP functions by stabilizing the protein conformation that binds the tetrahedral intermediate(s) formed during glutamine hydrolysis. Inhibited by the product CTP, via allosteric rather than competitive inhibition. Functionally, catalyzes the ATP-dependent amination of UTP to CTP with either L-glutamine or ammonia as the source of nitrogen. Regulates intracellular CTP levels through interactions with the four ribonucleotide triphosphates. In Shewanella frigidimarina (strain NCIMB 400), this protein is CTP synthase.